Here is a 1108-residue protein sequence, read N- to C-terminus: DNA-directed RNA polymerase subunit beta (1108 aa).

The interval 1081 to 1108 (SPRRTPARPTIDYSALDDTDDKEGATTF) is disordered.

Belongs to the RNA polymerase beta chain family. In terms of assembly, in cyanobacteria the RNAP catalytic core is composed of 2 alpha, 1 beta, 1 beta', 1 gamma and 1 omega subunit. When a sigma factor is associated with the core the holoenzyme is formed, which can initiate transcription.

It catalyses the reaction RNA(n) + a ribonucleoside 5'-triphosphate = RNA(n+1) + diphosphate. DNA-dependent RNA polymerase catalyzes the transcription of DNA into RNA using the four ribonucleoside triphosphates as substrates. The protein is DNA-directed RNA polymerase subunit beta of Thermosynechococcus vestitus (strain NIES-2133 / IAM M-273 / BP-1).